Here is a 267-residue protein sequence, read N- to C-terminus: 2-keto-3-deoxy-L-rhamnonate aldolase (267 aa).

His-49 serves as the catalytic Proton acceptor. Gln-151 contacts substrate. Residue Glu-153 participates in Mg(2+) binding. 2 residues coordinate substrate: Ala-178 and Asp-179. Asp-179 is a Mg(2+) binding site.

It belongs to the HpcH/HpaI aldolase family. KDR aldolase subfamily. Homohexamer. Mg(2+) serves as cofactor.

The catalysed reaction is 2-dehydro-3-deoxy-L-rhamnonate = (S)-lactaldehyde + pyruvate. Catalyzes the reversible retro-aldol cleavage of 2-keto-3-deoxy-L-rhamnonate (KDR) to pyruvate and lactaldehyde. In Salmonella paratyphi A (strain ATCC 9150 / SARB42), this protein is 2-keto-3-deoxy-L-rhamnonate aldolase.